The following is a 188-amino-acid chain: Phosphatidylinositol N-acetylglucosaminyltransferase subunit H (188 aa).

It belongs to the PIGH family. Component of the glycosylphosphatidylinositol-N-acetylglucosaminyltransferase (GPI-GnT) complex composed at least by PIGA, PIGC, PIGH, PIGP, PIGQ, PIGY and DPM2. Interacts with PIGQ.

It is found in the cytoplasm. It participates in glycolipid biosynthesis; glycosylphosphatidylinositol-anchor biosynthesis. In terms of biological role, part of the glycosylphosphatidylinositol-N-acetylglucosaminyltransferase (GPI-GnT) complex that catalyzes the transfer of N-acetylglucosamine from UDP-N-acetylglucosamine to phosphatidylinositol and participates in the first step of GPI biosynthesis. The protein is Phosphatidylinositol N-acetylglucosaminyltransferase subunit H of Homo sapiens (Human).